The primary structure comprises 373 residues: Putative glutamate--cysteine ligase 2-1 (373 aa).

It belongs to the glutamate--cysteine ligase type 2 family. YbdK subfamily.

The enzyme catalyses L-cysteine + L-glutamate + ATP = gamma-L-glutamyl-L-cysteine + ADP + phosphate + H(+). In terms of biological role, ATP-dependent carboxylate-amine ligase which exhibits weak glutamate--cysteine ligase activity. This Legionella pneumophila (strain Lens) protein is Putative glutamate--cysteine ligase 2-1.